The primary structure comprises 535 residues: Secreted lipase 5 (535 aa).

Positions 1–17 (MHLKSLLLAALPLLLEA) are cleaved as a signal peptide. N-linked (GlcNAc...) asparagine glycosylation is found at asparagine 32 and asparagine 119. Serine 241 (acyl-ester intermediate) is an active-site residue. Residues asparagine 282, asparagine 341, asparagine 347, and asparagine 432 are each glycosylated (N-linked (GlcNAc...) asparagine).

This sequence belongs to the type-B carboxylesterase/lipase family.

Its subcellular location is the secreted. It carries out the reaction a carboxylic ester + H2O = an alcohol + a carboxylate + H(+). Secreted lipase involved in plant virulence. Has a substrate preference for p-nitrophenyl esters with a carbon chain length of C8 (p-nitrophenyl caprylate). The polypeptide is Secreted lipase 5 (Gibberella zeae (strain ATCC MYA-4620 / CBS 123657 / FGSC 9075 / NRRL 31084 / PH-1) (Wheat head blight fungus)).